An 862-amino-acid polypeptide reads, in one-letter code: Valine--tRNA ligase (862 aa).

Positions 43–53 (PTVSGALHVGH) match the 'HIGH' region motif. Residues 459-494 (ERPILPDDAALPVDPSSDTPTGYHDSQRHQPGGFMA) are disordered. The 'KMSKS' region signature appears at 574–578 (KMSKS). Lys577 contacts ATP.

It belongs to the class-I aminoacyl-tRNA synthetase family. ValS type 2 subfamily. In terms of assembly, monomer.

The protein resides in the cytoplasm. It catalyses the reaction tRNA(Val) + L-valine + ATP = L-valyl-tRNA(Val) + AMP + diphosphate. Functionally, catalyzes the attachment of valine to tRNA(Val). As ValRS can inadvertently accommodate and process structurally similar amino acids such as threonine, to avoid such errors, it has a 'posttransfer' editing activity that hydrolyzes mischarged Thr-tRNA(Val) in a tRNA-dependent manner. This is Valine--tRNA ligase from Salinispora arenicola (strain CNS-205).